Consider the following 287-residue polypeptide: Nucleotide-binding protein GM21_3387 (287 aa).

8–15 provides a ligand contact to ATP; sequence GLSGSGKS. 59–62 contributes to the GTP binding site; that stretch reads DIRS.

The protein belongs to the RapZ-like family.

Functionally, displays ATPase and GTPase activities. The protein is Nucleotide-binding protein GM21_3387 of Geobacter sp. (strain M21).